Reading from the N-terminus, the 260-residue chain is Beta-lactamase SHV-6 (260 aa).

Residues 1–11 (LLATLPLAVHA) form the signal peptide. The active-site Acyl-ester intermediate is S56. The cysteines at positions 63 and 109 are disulfide-linked. The Proton acceptor role is filled by E154. Position 220–222 (220–222 (KTG)) interacts with substrate.

This sequence belongs to the class-A beta-lactamase family.

It carries out the reaction a beta-lactam + H2O = a substituted beta-amino acid. Functionally, SHV enzymes hydrolyze broad spectrum cephalosporins notably cefotaxime and ceftazidime. This Klebsiella pneumoniae protein is Beta-lactamase SHV-6 (bla).